We begin with the raw amino-acid sequence, 1025 residues long: Putative calcium-transporting ATPase 11, plasma membrane-type (1025 aa).

The Cytoplasmic portion of the chain corresponds to 1-157 (MSNLLKDFEV…NRYTEKPARS (157 aa)). Residues 19–30 (ARQRWRSSVGLV) form an interaction with calmodulin region. The helical transmembrane segment at 158–178 (FLTFVWEALQDITLIILMVCA) threads the bilayer. The Lumenal segment spans residues 179–196 (VVSIGVGVATEGFPKGMY). The chain crosses the membrane as a helical span at residues 197–217 (DGTGILLSIILVVMVTAISDY). Over 218–345 (KQSLQFRDLD…EDETPLQVKL (128 aa)) the chain is Cytoplasmic. A helical membrane pass occupies residues 346-365 (NGVATIIGKIGLGFAVLTFV). Residues 366–395 (VLCIRFVVEKATAGSITEWSSEDALTLLDY) lie on the Lumenal side of the membrane. The chain crosses the membrane as a helical span at residues 396–413 (FAIAVTIIVVAVPEGLPL). The Cytoplasmic segment spans residues 414 to 801 (AVTLSLAFAM…KWGRAVYINI (388 aa)). Residue Asp-451 is the 4-aspartylphosphate intermediate of the active site. Positions 746 and 750 each coordinate Mg(2+). Residues 802–820 (QKFVQFQLTVNVVALIINF) traverse the membrane as a helical segment. Residues 821-831 (VSACITGSAPL) are Lumenal-facing. The chain crosses the membrane as a helical span at residues 832 to 852 (TAVQLLWVNMIMDTLGALALA). Residues 853-872 (TEPPNEGLMKRQPIGRTASF) are Cytoplasmic-facing. A helical membrane pass occupies residues 873 to 895 (ITRAMWRNIIGQSIYQLIVLGIL). Residues 896 to 907 (NFAGKQILNLNG) are Lumenal-facing. A helical transmembrane segment spans residues 908-929 (PDSTIVLNTIIFNSFVFCQVFN). Over 930–947 (EVNSREIEKINVFEGMFK) the chain is Cytoplasmic. Residues 948 to 969 (SWVFVAVMTATVGFQVIIVEFL) traverse the membrane as a helical segment. Residues 970-979 (GAFASTVPLS) lie on the Lumenal side of the membrane. Residues 980 to 1001 (WQHWLLCILIGSVSMILAVGLK) traverse the membrane as a helical segment. Over 1002 to 1025 (CIPVESNRHHDGYELLPSGPSDSA) the chain is Cytoplasmic.

This sequence belongs to the cation transport ATPase (P-type) (TC 3.A.3) family. Type IIB subfamily.

Its subcellular location is the membrane. It catalyses the reaction Ca(2+)(in) + ATP + H2O = Ca(2+)(out) + ADP + phosphate + H(+). Activated by calmodulin. In terms of biological role, this magnesium-dependent enzyme catalyzes the hydrolysis of ATP coupled with the translocation of calcium from the cytosol out of the cell or into organelles. The sequence is that of Putative calcium-transporting ATPase 11, plasma membrane-type (ACA11) from Arabidopsis thaliana (Mouse-ear cress).